The following is a 399-amino-acid chain: Carbamoyl phosphate synthase small chain (399 aa).

The CPSase stretch occupies residues Met1 to Glu204. Positions 60, 256, and 258 each coordinate L-glutamine. Residues His208–Gln396 form the Glutamine amidotransferase type-1 domain. Cys285 functions as the Nucleophile in the catalytic mechanism. 5 residues coordinate L-glutamine: Leu286, Gln289, Asn327, Gly329, and Phe330. Active-site residues include His369 and Glu371.

This sequence belongs to the CarA family. As to quaternary structure, composed of two chains; the small (or glutamine) chain promotes the hydrolysis of glutamine to ammonia, which is used by the large (or ammonia) chain to synthesize carbamoyl phosphate. Tetramer of heterodimers (alpha,beta)4.

The catalysed reaction is hydrogencarbonate + L-glutamine + 2 ATP + H2O = carbamoyl phosphate + L-glutamate + 2 ADP + phosphate + 2 H(+). It carries out the reaction L-glutamine + H2O = L-glutamate + NH4(+). The protein operates within amino-acid biosynthesis; L-arginine biosynthesis; carbamoyl phosphate from bicarbonate: step 1/1. Its pathway is pyrimidine metabolism; UMP biosynthesis via de novo pathway; (S)-dihydroorotate from bicarbonate: step 1/3. Its function is as follows. Small subunit of the glutamine-dependent carbamoyl phosphate synthetase (CPSase). CPSase catalyzes the formation of carbamoyl phosphate from the ammonia moiety of glutamine, carbonate, and phosphate donated by ATP, constituting the first step of 2 biosynthetic pathways, one leading to arginine and/or urea and the other to pyrimidine nucleotides. The small subunit (glutamine amidotransferase) binds and cleaves glutamine to supply the large subunit with the substrate ammonia. In Bartonella bacilliformis (strain ATCC 35685 / KC583 / Herrer 020/F12,63), this protein is Carbamoyl phosphate synthase small chain.